We begin with the raw amino-acid sequence, 336 residues long: Nicotinate-nucleotide--dimethylbenzimidazole phosphoribosyltransferase (336 aa).

The Proton acceptor role is filled by glutamate 304.

This sequence belongs to the CobT family.

It catalyses the reaction 5,6-dimethylbenzimidazole + nicotinate beta-D-ribonucleotide = alpha-ribazole 5'-phosphate + nicotinate + H(+). It participates in nucleoside biosynthesis; alpha-ribazole biosynthesis; alpha-ribazole from 5,6-dimethylbenzimidazole: step 1/2. Catalyzes the synthesis of alpha-ribazole-5'-phosphate from nicotinate mononucleotide (NAMN) and 5,6-dimethylbenzimidazole (DMB). The protein is Nicotinate-nucleotide--dimethylbenzimidazole phosphoribosyltransferase of Ruegeria sp. (strain TM1040) (Silicibacter sp.).